The following is a 242-amino-acid chain: Biosynthetic peptidoglycan transglycosylase (242 aa).

Residues 19 to 39 (LMVVLAVFWGGGIALFSVAPV) traverse the membrane as a helical segment.

Belongs to the glycosyltransferase 51 family.

It localises to the cell inner membrane. The catalysed reaction is [GlcNAc-(1-&gt;4)-Mur2Ac(oyl-L-Ala-gamma-D-Glu-L-Lys-D-Ala-D-Ala)](n)-di-trans,octa-cis-undecaprenyl diphosphate + beta-D-GlcNAc-(1-&gt;4)-Mur2Ac(oyl-L-Ala-gamma-D-Glu-L-Lys-D-Ala-D-Ala)-di-trans,octa-cis-undecaprenyl diphosphate = [GlcNAc-(1-&gt;4)-Mur2Ac(oyl-L-Ala-gamma-D-Glu-L-Lys-D-Ala-D-Ala)](n+1)-di-trans,octa-cis-undecaprenyl diphosphate + di-trans,octa-cis-undecaprenyl diphosphate + H(+). Its pathway is cell wall biogenesis; peptidoglycan biosynthesis. Its function is as follows. Peptidoglycan polymerase that catalyzes glycan chain elongation from lipid-linked precursors. The chain is Biosynthetic peptidoglycan transglycosylase from Escherichia coli O157:H7.